The primary structure comprises 427 residues: 3-phosphoshikimate 1-carboxyvinyltransferase (427 aa).

Residues Lys-22, Ser-23, and Arg-27 each coordinate 3-phosphoshikimate. Residue Lys-22 coordinates phosphoenolpyruvate. Phosphoenolpyruvate contacts are provided by Gly-96 and Arg-124. The 3-phosphoshikimate site is built by Ser-169, Ser-170, Gln-171, Ser-197, Asp-313, Asn-336, and Lys-340. Gln-171 contacts phosphoenolpyruvate. The active-site Proton acceptor is Asp-313. 3 residues coordinate phosphoenolpyruvate: Arg-344, Arg-386, and Lys-411.

Belongs to the EPSP synthase family. In terms of assembly, monomer.

Its subcellular location is the cytoplasm. The catalysed reaction is 3-phosphoshikimate + phosphoenolpyruvate = 5-O-(1-carboxyvinyl)-3-phosphoshikimate + phosphate. Its pathway is metabolic intermediate biosynthesis; chorismate biosynthesis; chorismate from D-erythrose 4-phosphate and phosphoenolpyruvate: step 6/7. In terms of biological role, catalyzes the transfer of the enolpyruvyl moiety of phosphoenolpyruvate (PEP) to the 5-hydroxyl of shikimate-3-phosphate (S3P) to produce enolpyruvyl shikimate-3-phosphate and inorganic phosphate. This Escherichia coli O17:K52:H18 (strain UMN026 / ExPEC) protein is 3-phosphoshikimate 1-carboxyvinyltransferase.